Consider the following 278-residue polypeptide: MALKNFNPTTPSQRQLVIVDRSGLYKGKPVKSLTEGLSSKGGRNNLGRITVRFQGGGHKRTYRLVDFKRRKFDVEGTVERLEYDPNRTAFIALITYADGEQAYILAPQRLAAGDKVIASDKAVDVKPGNAMPLQYVPVGSIVHNVELKPGKGGQVARSAGAYVQLVGRDAGMAILRLSSGEQRLVHGTCLATVGAVSNSDHGNINDGKAGRSRWRGKRPHVRGVVMNPVDHPHGGGEGRTSGGRHPVSPWGKPTKGKRTRSNKSTDKFIMRSRHQKKK.

Residues H201–K278 are disordered. Residues G210–V221 are compositionally biased toward basic residues.

Belongs to the universal ribosomal protein uL2 family. Part of the 50S ribosomal subunit. Forms a bridge to the 30S subunit in the 70S ribosome.

In terms of biological role, one of the primary rRNA binding proteins. Required for association of the 30S and 50S subunits to form the 70S ribosome, for tRNA binding and peptide bond formation. It has been suggested to have peptidyltransferase activity; this is somewhat controversial. Makes several contacts with the 16S rRNA in the 70S ribosome. In Allorhizobium ampelinum (strain ATCC BAA-846 / DSM 112012 / S4) (Agrobacterium vitis (strain S4)), this protein is Large ribosomal subunit protein uL2.